We begin with the raw amino-acid sequence, 303 residues long: Nucleotide-binding protein SAB0719 (303 aa).

18 to 25 provides a ligand contact to ATP; that stretch reads GLSGAGKS. 69-72 serves as a coordination point for GTP; sequence DLRG.

This sequence belongs to the RapZ-like family.

Functionally, displays ATPase and GTPase activities. This is Nucleotide-binding protein SAB0719 from Staphylococcus aureus (strain bovine RF122 / ET3-1).